Consider the following 356-residue polypeptide: Protein RecA (356 aa).

An ATP-binding site is contributed by 68–75 (GQESSGKT).

The protein belongs to the RecA family.

Its subcellular location is the cytoplasm. Its function is as follows. Can catalyze the hydrolysis of ATP in the presence of single-stranded DNA, the ATP-dependent uptake of single-stranded DNA by duplex DNA, and the ATP-dependent hybridization of homologous single-stranded DNAs. It interacts with LexA causing its activation and leading to its autocatalytic cleavage. The polypeptide is Protein RecA (Thermotoga petrophila (strain ATCC BAA-488 / DSM 13995 / JCM 10881 / RKU-1)).